The primary structure comprises 830 residues: Penicillin-binding protein 1A (830 aa).

Basic residues predominate over residues 1-17 (MTERKREHKDRKQKKNS). The segment at 1–20 (MTERKREHKDRKQKKNSPKN) is disordered. The Cytoplasmic portion of the chain corresponds to 1 to 30 (MTERKREHKDRKQKKNSPKNQSKVTKFLKW). The chain crosses the membrane as a helical; Signal-anchor for type II membrane protein span at residues 31–51 (FFIGILLLGITAVTVVGIYVL). Residues 52–830 (SIIRSSPELD…QNGQNNNITQ (779 aa)) are Extracellular-facing. A transglycosylase region spans residues 72–244 (SILYDDQGNF…PTSYDGLSEA (173 aa)). E111 (proton donor; for transglycosylase activity) is an active-site residue. Residues 378-663 (ASATIIDYKT…TSPIFGKIMG (286 aa)) form a transpeptidase region. Residue S417 is the Acyl-ester intermediate; for transpeptidase activity of the active site. The tract at residues 731-830 (APDTNDNNNS…QNGQNNNITQ (100 aa)) is disordered. Low complexity predominate over residues 735–746 (NDNNNSGANEGN). The segment covering 747–758 (KQQETKPEEVKP) has biased composition (basic and acidic residues). Low complexity-rich tracts occupy residues 759 to 807 (NENN…NTNN) and 816 to 830 (GNNQNQNGQNNNITQ).

It in the N-terminal section; belongs to the glycosyltransferase 51 family. This sequence in the C-terminal section; belongs to the transpeptidase family.

It localises to the cell membrane. It catalyses the reaction [GlcNAc-(1-&gt;4)-Mur2Ac(oyl-L-Ala-gamma-D-Glu-L-Lys-D-Ala-D-Ala)](n)-di-trans,octa-cis-undecaprenyl diphosphate + beta-D-GlcNAc-(1-&gt;4)-Mur2Ac(oyl-L-Ala-gamma-D-Glu-L-Lys-D-Ala-D-Ala)-di-trans,octa-cis-undecaprenyl diphosphate = [GlcNAc-(1-&gt;4)-Mur2Ac(oyl-L-Ala-gamma-D-Glu-L-Lys-D-Ala-D-Ala)](n+1)-di-trans,octa-cis-undecaprenyl diphosphate + di-trans,octa-cis-undecaprenyl diphosphate + H(+). The enzyme catalyses Preferential cleavage: (Ac)2-L-Lys-D-Ala-|-D-Ala. Also transpeptidation of peptidyl-alanyl moieties that are N-acyl substituents of D-alanine.. The protein operates within cell wall biogenesis; peptidoglycan biosynthesis. Cell wall formation. Synthesis of cross-linked peptidoglycan from the lipid intermediates. The enzyme has a penicillin-insensitive transglycosylase N-terminal domain (formation of linear glycan strands) and a penicillin-sensitive transpeptidase C-terminal domain (cross-linking of the peptide subunits). The chain is Penicillin-binding protein 1A (pbpA) from Clostridium perfringens (strain ATCC 13124 / DSM 756 / JCM 1290 / NCIMB 6125 / NCTC 8237 / Type A).